The chain runs to 412 residues: [Pyruvate dehydrogenase (acetyl-transferring)] kinase isozyme 4, mitochondrial (412 aa).

The region spanning 138 to 368 is the Histidine kinase domain; that stretch reads ILEYKDNCTV…DAIIYLKALS (231 aa). ATP is bound by residues 254-261, Asp-293, 312-313, and 329-334; these read ELFKNAMR, ST, and GFGYGL.

Belongs to the PDK/BCKDK protein kinase family. Homodimer. Interacts with the pyruvate dehydrogenase complex subunit DLAT, and is part of the multimeric pyruvate dehydrogenase complex that contains multiple copies of pyruvate dehydrogenase (E1), dihydrolipoamide acetyltransferase (DLAT, E2) and lipoamide dehydrogenase (DLD, E3). Ubiquitous; highest levels of expression in heart and skeletal muscle.

It localises to the mitochondrion matrix. It carries out the reaction L-seryl-[pyruvate dehydrogenase E1 alpha subunit] + ATP = O-phospho-L-seryl-[pyruvate dehydrogenase E1 alpha subunit] + ADP + H(+). Functionally, kinase that plays a key role in regulation of glucose and fatty acid metabolism and homeostasis via phosphorylation of the pyruvate dehydrogenase subunits PDHA1 and PDHA2. This inhibits pyruvate dehydrogenase activity, and thereby regulates metabolite flux through the tricarboxylic acid cycle, down-regulates aerobic respiration and inhibits the formation of acetyl-coenzyme A from pyruvate. Inhibition of pyruvate dehydrogenase decreases glucose utilization and increases fat metabolism in response to prolonged fasting and starvation. Plays an important role in maintaining normal blood glucose levels under starvation, and is involved in the insulin signaling cascade. Via its regulation of pyruvate dehydrogenase activity, plays an important role in maintaining normal blood pH and in preventing the accumulation of ketone bodies under starvation. In the fed state, mediates cellular responses to glucose levels and to a high-fat diet. Regulates both fatty acid oxidation and de novo fatty acid biosynthesis. Plays a role in the generation of reactive oxygen species. Protects detached epithelial cells against anoikis. Plays a role in cell proliferation via its role in regulating carbohydrate and fatty acid metabolism. The sequence is that of [Pyruvate dehydrogenase (acetyl-transferring)] kinase isozyme 4, mitochondrial (Pdk4) from Rattus norvegicus (Rat).